We begin with the raw amino-acid sequence, 152 residues long: Transcriptional repressor NrdR (152 aa).

The segment at 3 to 34 is a zinc-finger region; that stretch reads CPHCHHNGSRVIDSRPAEDGMSIRRRRECVNC. Residues 49-139 form the ATP-cone domain; the sequence is LLVVKKDGTR…VYRQFKDVDA (91 aa).

Belongs to the NrdR family. Zn(2+) is required as a cofactor.

In terms of biological role, negatively regulates transcription of bacterial ribonucleotide reductase nrd genes and operons by binding to NrdR-boxes. In Limosilactobacillus fermentum (strain NBRC 3956 / LMG 18251) (Lactobacillus fermentum), this protein is Transcriptional repressor NrdR.